A 384-amino-acid polypeptide reads, in one-letter code: MPENYTPAAAATGTWTEEEIRHQPRAWIRSLTNIDALRSALNNFLEPLLRKENLRIILTGAGTSAFIGDIIAPWLASHTGKNFSAVPTTDLVTNPMDYLNPAHPLLLISFGRSGNSPESVAAVELANQFVPECYHLPITCNEAGALYQNAINSDNAFALLMPAETHDRGFAMTSSITTMMASCLAVFAPETINSQTFRDVADRCQAILTSLGDFSEGVFGYAPWKRIVYLGSGGLQGAARESALKVLELTAGKLAAFYDSPTGFRHGPKSLVDDETLVVVFVSSHPYTRQYDLDLLAELRRDNQAMRVIAIAAESSDIVAAGPHIILPPSRHFIDVEQAFCFLMYAQTFALMQSLHMGNTPDTPSASGTVNRVVQGVIIHPWQA.

SIS domains are found at residues 45 to 197 (LEPL…SQTF) and 215 to 364 (SEGV…PDTP).

This sequence belongs to the SIS family. AgaS subfamily.

It carries out the reaction D-galactosamine 6-phosphate + H2O = D-tagatopyranose 1-phosphate + NH4(+). Its function is as follows. Catalyzes the isomerization-deamination of galactosamine 6-phosphate to form tagatofuranose 6-phosphate and ammonium ion. The chain is Putative D-galactosamine-6-phosphate deaminase AgaS (agaS) from Escherichia coli (strain K12).